A 473-amino-acid chain; its full sequence is MKTDTSTFLAQQIVRLRRRDQIRRLMQRDKTPLAILFMAAVVGTLTGLVGVAFEKAVSWVQNMRIGALVQVADHAFLLWPLAFILSALLAMVGYFLVRKFAPEAGGSGIPEIEGALEELRPVRWWRVLPVKFIGGMGTLGAGMVLGREGPTVQIGGNLGRMVLDVFRMRSAEARHTLLATGAAAGLSAAFNAPLAGILFIIEEMRPQFRYNLISIKAVFTGVIMSSIVFRIFNGEAPIIEVGKLSDAPVNTLWLYLILGIIFGCVGPVFNSLVLRTQDMFQRFHGGEIKKWVLMGGAIGGLCGILGLIEPAAAGGGFNLIPIAAAGNFSVGLLLFIFITRVVTTLLCFSSGAPGGIFAPMLALGTLLGTAFGMAAAVLFPQYHLEAGTFAIAGMGALMAASVRAPLTGIVLVLEMTDNYQLILPMIITCLGATLLAQFLGGKPLYSTILARTLAKQDAEQAEKNQNAPADENT.

The Cytoplasmic portion of the chain corresponds to 1–32 (MKTDTSTFLAQQIVRLRRRDQIRRLMQRDKTP). A helical transmembrane segment spans residues 33–69 (LAILFMAAVVGTLTGLVGVAFEKAVSWVQNMRIGALV). The Periplasmic segment spans residues 70–76 (QVADHAF). Residues 77-100 (LLWPLAFILSALLAMVGYFLVRKF) form a helical membrane-spanning segment. A Selectivity filter part_1 motif is present at residues 106–110 (GSGIP). Serine 107 lines the chloride pocket. Residues 109–116 (IPEIEGAL) constitute an intramembrane region (helical). Over 117–123 (EELRPVR) the chain is Cytoplasmic. The next 2 membrane-spanning stretches (helical) occupy residues 124 to 141 (WWRV…TLGA) and 148 to 166 (EGPT…LDVF). A Selectivity filter part_2 motif is present at residues 146 to 150 (GREGP). The Cytoplasmic segment spans residues 167–176 (RMRSAEARHT). Positions 177 to 189 (LLATGAAAGLSAA) form an intramembrane region, helical. The segment at residues 190 to 192 (FNA) is an intramembrane region (note=Loop between two helices). Positions 193 to 201 (PLAGILFII) form an intramembrane region, helical. Residues 202–214 (EEMRPQFRYNLIS) are Cytoplasmic-facing. Residues 215–232 (IKAVFTGVIMSSIVFRIF) traverse the membrane as a helical segment. The Periplasmic portion of the chain corresponds to 233 to 252 (NGEAPIIEVGKLSDAPVNTL). A helical transmembrane segment spans residues 253-281 (WLYLILGIIFGCVGPVFNSLVLRTQDMFQ). Topologically, residues 282–287 (RFHGGE) are cytoplasmic. Residues 288 to 308 (IKKWVLMGGAIGGLCGILGLI) form a helical membrane-spanning segment. At 309 to 329 (EPAAAGGGFNLIPIAAAGNFS) the chain is on the periplasmic side. Residues 330–349 (VGLLLFIFITRVVTTLLCFS) traverse the membrane as a helical segment. Residues 350 to 354 (SGAPG) are Cytoplasmic-facing. The Selectivity filter part_3 signature appears at 355-359 (GIFAP). Residues 355–378 (GIFAPMLALGTLLGTAFGMAAAVL) form a helical membrane-spanning segment. Chloride is bound by residues isoleucine 356 and phenylalanine 357. Residues 379–386 (FPQYHLEA) are Periplasmic-facing. The helical intramembrane region spans 387 to 401 (GTFAIAGMGALMAAS). The segment at residues 402–404 (VRA) is an intramembrane region (note=Loop between two helices). Positions 405 to 416 (PLTGIVLVLEMT) form an intramembrane region, helical. Residues 417-421 (DNYQL) constitute an intramembrane region (note=Loop between two helices). Residues 422–438 (ILPMIITCLGATLLAQF) traverse the membrane as a helical segment. Topologically, residues 439–473 (LGGKPLYSTILARTLAKQDAEQAEKNQNAPADENT) are cytoplasmic. Tyrosine 445 contacts chloride.

The protein belongs to the chloride channel (TC 2.A.49) family. ClcA subfamily. Homodimer.

The protein resides in the cell inner membrane. The enzyme catalyses 2 chloride(in) + H(+)(out) = 2 chloride(out) + H(+)(in). Functionally, proton-coupled chloride transporter. Functions as antiport system and exchanges two chloride ions for 1 proton. Probably acts as an electrical shunt for an outwardly-directed proton pump that is linked to amino acid decarboxylation, as part of the extreme acid resistance (XAR) response. This is H(+)/Cl(-) exchange transporter ClcA (clcA) from Salmonella typhimurium (strain LT2 / SGSC1412 / ATCC 700720).